The following is a 536-amino-acid chain: Cytochrome P450 monooxygenase fscF (536 aa).

The helical transmembrane segment at 9-29 (VSWLCALFTAIALYCIAVAFY) threads the bilayer. A heme-binding site is contributed by cysteine 464.

Belongs to the cytochrome P450 family. Heme is required as a cofactor.

Its subcellular location is the membrane. It participates in secondary metabolite biosynthesis. Its function is as follows. Cytochrome P450 monooxygenase; part of the fragmented gene cluster that mediates the biosynthesis of fusarochromene, a tryptophan-derived metabolite closely related to a group of mycotoxins including fusarochromanone. Within the pathway, fscF catalyzes the epoxidation of desacetylfusarochromene which opens the way to the production of fusarochromanones. The first step of the pathway is the epimerization of L-tryptophan to D-tryptophan in the presence of the NRPS-like tryptophan epimerase fscC. D-tryptophan is subsequently hydroxylated by the tryptophan 6-hydroxylase fscE to yield 6-hydroxytryptophan. The pyrrole ring undergoes cleavaged by the tryptophan 2,3-dioxygenase fscD and is finally converted to 4-hydroxykyrunenine by the hydrolase fscH. The NRPS-like oxidoreductase fscA reduces the carboxyl group to primary alcohol and the DMATS-type prenyltransferase fscG performs prenylation, followed by the formation of a chromene ring catalyzed by the oxidoreductase fscI, which leads to desacetylfusarochromene. Epoxidation by fscF and rearrangement reactions of chromene double bonds convert compound desacetylfusarochromene to fusarochromanones. Although specific acetyltransferases were not found near the fsc gene cluster, several predicted enzymes containing the N-acetyltransferase superfamily domain are present in the genome of F.equiseti. These predicted enzymes may have the potential to convert desacetylfusarochromene to fusarochromene. This Fusarium equiseti (Fusarium scirpi) protein is Cytochrome P450 monooxygenase fscF.